Here is a 111-residue protein sequence, read N- to C-terminus: UPF0060 membrane protein xcc-b100_1273 (111 aa).

The next 4 membrane-spanning stretches (helical) occupy residues 8–28, 34–54, 62–82, and 91–111; these read LLLF…PYLW, SVWL…LLTL, VYAA…WWVD, and LLGA…PRSG.

It belongs to the UPF0060 family.

It localises to the cell inner membrane. The chain is UPF0060 membrane protein xcc-b100_1273 from Xanthomonas campestris pv. campestris (strain B100).